A 107-amino-acid polypeptide reads, in one-letter code: Large ribosomal subunit protein bL21 (107 aa).

Belongs to the bacterial ribosomal protein bL21 family. Part of the 50S ribosomal subunit. Contacts protein L20.

Functionally, this protein binds to 23S rRNA in the presence of protein L20. The protein is Large ribosomal subunit protein bL21 of Pseudothermotoga lettingae (strain ATCC BAA-301 / DSM 14385 / NBRC 107922 / TMO) (Thermotoga lettingae).